The following is a 445-amino-acid chain: Adenylosuccinate synthetase (445 aa).

GTP is bound by residues 24-30 and 52-54; these read GDEGKGK and GHT. The active-site Proton acceptor is Asp25. Residues Asp25 and Gly52 each coordinate Mg(2+). IMP-binding positions include 25–28, 50–53, Thr147, Arg161, Asn238, Thr253, and Arg317; these read DEGK and NAGH. His53 (proton donor) is an active-site residue. Position 313 to 319 (313 to 319) interacts with substrate; it reads TTTGRRR. GTP-binding positions include Arg319, 345–347, and 427–429; these read KLD and GVG.

It belongs to the adenylosuccinate synthetase family. Homodimer. The cofactor is Mg(2+).

It is found in the cytoplasm. It carries out the reaction IMP + L-aspartate + GTP = N(6)-(1,2-dicarboxyethyl)-AMP + GDP + phosphate + 2 H(+). Its pathway is purine metabolism; AMP biosynthesis via de novo pathway; AMP from IMP: step 1/2. Plays an important role in the de novo pathway and in the salvage pathway of purine nucleotide biosynthesis. Catalyzes the first committed step in the biosynthesis of AMP from IMP. This Malassezia globosa (strain ATCC MYA-4612 / CBS 7966) (Dandruff-associated fungus) protein is Adenylosuccinate synthetase.